Here is a 147-residue protein sequence, read N- to C-terminus: MLYPLSILTSEKNVFNEDVYSVNVPGADGYFEVLAHHATVIALLQPGKLTIINKDHQKLYFGITTGFIEVSHNSATIIADAIESVQEIDVERAKQSYERAKMRLESPDKHVDKERAKRSLNRAKNRIKLFLEIHPQVSFIPLKALLI.

This sequence belongs to the ATPase epsilon chain family. In terms of assembly, F-type ATPases have 2 components, CF(1) - the catalytic core - and CF(0) - the membrane proton channel. CF(1) has five subunits: alpha(3), beta(3), gamma(1), delta(1), epsilon(1). CF(0) has three main subunits: a, b and c.

The protein localises to the cell inner membrane. Its function is as follows. Produces ATP from ADP in the presence of a proton gradient across the membrane. The polypeptide is ATP synthase epsilon chain (Protochlamydia amoebophila (strain UWE25)).